A 332-amino-acid polypeptide reads, in one-letter code: Ornithine carbamoyltransferase 1, catabolic (332 aa).

Carbamoyl phosphate-binding positions include 56 to 59 (STRT), Gln-83, Arg-107, and 134 to 137 (HPTQ). L-ornithine contacts are provided by residues Asn-167, Asp-231, and 235-236 (SM). Carbamoyl phosphate-binding positions include 273–274 (CL) and Arg-318.

Belongs to the aspartate/ornithine carbamoyltransferase superfamily. OTCase family.

The protein localises to the cytoplasm. The enzyme catalyses carbamoyl phosphate + L-ornithine = L-citrulline + phosphate + H(+). It participates in amino-acid degradation; L-arginine degradation via ADI pathway; carbamoyl phosphate from L-arginine: step 2/2. Functionally, reversibly catalyzes the transfer of the carbamoyl group from carbamoyl phosphate (CP) to the N(epsilon) atom of ornithine (ORN) to produce L-citrulline. In Streptococcus agalactiae serotype III (strain NEM316), this protein is Ornithine carbamoyltransferase 1, catabolic (arcB1).